Reading from the N-terminus, the 173-residue chain is NADH-ubiquinone oxidoreductase chain 6 (173 aa).

The next 6 helical transmembrane spans lie at 1–21, 27–47, 48–68, 87–107, 113–133, and 139–159; these read MTYFVVFLGLCFVLGGLAVAS, YGVVGLVLASVAGCGWLLSLG, VSFVSLVLFMVYLGGMLVVFV, VVGYGMSFIVVLVVGVVVGGF, FGVVTVDSAGVFFARLDFSGV, and CGVGMFLVAGWGLLLTLFVVL.

The protein belongs to the complex I subunit 6 family.

It localises to the mitochondrion membrane. The catalysed reaction is a ubiquinone + NADH + 5 H(+)(in) = a ubiquinol + NAD(+) + 4 H(+)(out). In terms of biological role, core subunit of the mitochondrial membrane respiratory chain NADH dehydrogenase (Complex I) that is believed to belong to the minimal assembly required for catalysis. Complex I functions in the transfer of electrons from NADH to the respiratory chain. The immediate electron acceptor for the enzyme is believed to be ubiquinone. The sequence is that of NADH-ubiquinone oxidoreductase chain 6 (MT-ND6) from Cepphus grylle (Black guillemot).